Consider the following 318-residue polypeptide: Transaldolase (318 aa).

Residue Lys-126 is the Schiff-base intermediate with substrate of the active site.

It belongs to the transaldolase family. Type 1 subfamily. In terms of assembly, homodimer.

The protein resides in the cytoplasm. The catalysed reaction is D-sedoheptulose 7-phosphate + D-glyceraldehyde 3-phosphate = D-erythrose 4-phosphate + beta-D-fructose 6-phosphate. It functions in the pathway carbohydrate degradation; pentose phosphate pathway; D-glyceraldehyde 3-phosphate and beta-D-fructose 6-phosphate from D-ribose 5-phosphate and D-xylulose 5-phosphate (non-oxidative stage): step 2/3. Functionally, transaldolase is important for the balance of metabolites in the pentose-phosphate pathway. This Cupriavidus necator (strain ATCC 17699 / DSM 428 / KCTC 22496 / NCIMB 10442 / H16 / Stanier 337) (Ralstonia eutropha) protein is Transaldolase.